Here is a 542-residue protein sequence, read N- to C-terminus: CTP synthase (542 aa).

Positions 1–265 (MARYVFITGG…DSEVLSAFGM (265 aa)) are amidoligase domain. A CTP-binding site is contributed by Ser-13. Ser-13 lines the UTP pocket. 14-19 (SLGKGI) lines the ATP pocket. Tyr-54 is an L-glutamine binding site. Residue Asp-71 coordinates ATP. Residues Asp-71 and Glu-139 each coordinate Mg(2+). Residues 146–148 (DIE), 186–191 (KTKPTQ), and Lys-222 contribute to the CTP site. UTP is bound by residues 186–191 (KTKPTQ) and Lys-222. In terms of domain architecture, Glutamine amidotransferase type-1 spans 291–541 (TIAVVGKYTG…IEATVEQSRL (251 aa)). Residue Ala-353 coordinates L-glutamine. Residue Cys-380 is the Nucleophile; for glutamine hydrolysis of the active site. Residues 381 to 384 (FGMQ), Glu-404, and Arg-469 contribute to the L-glutamine site. Residues His-514 and Glu-516 contribute to the active site.

Belongs to the CTP synthase family. Homotetramer.

It catalyses the reaction UTP + L-glutamine + ATP + H2O = CTP + L-glutamate + ADP + phosphate + 2 H(+). The enzyme catalyses L-glutamine + H2O = L-glutamate + NH4(+). It carries out the reaction UTP + NH4(+) + ATP = CTP + ADP + phosphate + 2 H(+). It participates in pyrimidine metabolism; CTP biosynthesis via de novo pathway; CTP from UDP: step 2/2. With respect to regulation, allosterically activated by GTP, when glutamine is the substrate; GTP has no effect on the reaction when ammonia is the substrate. The allosteric effector GTP functions by stabilizing the protein conformation that binds the tetrahedral intermediate(s) formed during glutamine hydrolysis. Inhibited by the product CTP, via allosteric rather than competitive inhibition. Catalyzes the ATP-dependent amination of UTP to CTP with either L-glutamine or ammonia as the source of nitrogen. Regulates intracellular CTP levels through interactions with the four ribonucleotide triphosphates. In Bartonella henselae (strain ATCC 49882 / DSM 28221 / CCUG 30454 / Houston 1) (Rochalimaea henselae), this protein is CTP synthase.